We begin with the raw amino-acid sequence, 213 residues long: Nicotinate-nucleotide adenylyltransferase (213 aa).

Belongs to the NadD family.

It carries out the reaction nicotinate beta-D-ribonucleotide + ATP + H(+) = deamido-NAD(+) + diphosphate. It participates in cofactor biosynthesis; NAD(+) biosynthesis; deamido-NAD(+) from nicotinate D-ribonucleotide: step 1/1. Its function is as follows. Catalyzes the reversible adenylation of nicotinate mononucleotide (NaMN) to nicotinic acid adenine dinucleotide (NaAD). This is Nicotinate-nucleotide adenylyltransferase from Salmonella typhimurium (strain LT2 / SGSC1412 / ATCC 700720).